A 207-amino-acid polypeptide reads, in one-letter code: Large ribosomal subunit protein uL4 (207 aa).

Residues 44 to 71 are disordered; that stretch reads RRQGTQSAKTRAEVRGGGRKPWKQKGTG. Residues 60–71 show a composition bias toward basic residues; sequence GGRKPWKQKGTG.

Belongs to the universal ribosomal protein uL4 family. As to quaternary structure, part of the 50S ribosomal subunit.

In terms of biological role, one of the primary rRNA binding proteins, this protein initially binds near the 5'-end of the 23S rRNA. It is important during the early stages of 50S assembly. It makes multiple contacts with different domains of the 23S rRNA in the assembled 50S subunit and ribosome. Its function is as follows. Forms part of the polypeptide exit tunnel. The chain is Large ribosomal subunit protein uL4 from Alkaliphilus oremlandii (strain OhILAs) (Clostridium oremlandii (strain OhILAs)).